Reading from the N-terminus, the 356-residue chain is Phosphoserine aminotransferase (356 aa).

An L-glutamate-binding site is contributed by Arg-41. Pyridoxal 5'-phosphate is bound by residues 75-76 (AT), Trp-100, Thr-147, Asp-166, and Gln-189. N6-(pyridoxal phosphate)lysine is present on Lys-190. 227–228 (NT) lines the pyridoxal 5'-phosphate pocket.

This sequence belongs to the class-V pyridoxal-phosphate-dependent aminotransferase family. SerC subfamily. Homodimer. Pyridoxal 5'-phosphate serves as cofactor.

It localises to the cytoplasm. It carries out the reaction O-phospho-L-serine + 2-oxoglutarate = 3-phosphooxypyruvate + L-glutamate. The catalysed reaction is 4-(phosphooxy)-L-threonine + 2-oxoglutarate = (R)-3-hydroxy-2-oxo-4-phosphooxybutanoate + L-glutamate. Its pathway is amino-acid biosynthesis; L-serine biosynthesis; L-serine from 3-phospho-D-glycerate: step 2/3. Functionally, catalyzes the reversible conversion of 3-phosphohydroxypyruvate to phosphoserine and of 3-hydroxy-2-oxo-4-phosphonooxybutanoate to phosphohydroxythreonine. This is Phosphoserine aminotransferase from Exiguobacterium sp. (strain ATCC BAA-1283 / AT1b).